The chain runs to 522 residues: Transmembrane protein 213R (522 aa).

The next 2 membrane-spanning stretches (helical) occupy residues 33-50 and 55-72; these read NTITRLILIASLVLLLFG and SLYILIIGLIIVIVIYSQ.

The protein belongs to the IIV-6 213R family.

The protein localises to the membrane. The sequence is that of Transmembrane protein 213R from Invertebrate iridescent virus 6 (IIV-6).